The chain runs to 95 residues: Aspartyl/glutamyl-tRNA(Asn/Gln) amidotransferase subunit C (95 aa).

This sequence belongs to the GatC family. In terms of assembly, heterotrimer of A, B and C subunits.

It carries out the reaction L-glutamyl-tRNA(Gln) + L-glutamine + ATP + H2O = L-glutaminyl-tRNA(Gln) + L-glutamate + ADP + phosphate + H(+). The catalysed reaction is L-aspartyl-tRNA(Asn) + L-glutamine + ATP + H2O = L-asparaginyl-tRNA(Asn) + L-glutamate + ADP + phosphate + 2 H(+). Functionally, allows the formation of correctly charged Asn-tRNA(Asn) or Gln-tRNA(Gln) through the transamidation of misacylated Asp-tRNA(Asn) or Glu-tRNA(Gln) in organisms which lack either or both of asparaginyl-tRNA or glutaminyl-tRNA synthetases. The reaction takes place in the presence of glutamine and ATP through an activated phospho-Asp-tRNA(Asn) or phospho-Glu-tRNA(Gln). This Ruegeria pomeroyi (strain ATCC 700808 / DSM 15171 / DSS-3) (Silicibacter pomeroyi) protein is Aspartyl/glutamyl-tRNA(Asn/Gln) amidotransferase subunit C.